A 159-amino-acid chain; its full sequence is Large ribosomal subunit protein uL23m (159 aa).

This sequence belongs to the universal ribosomal protein uL23 family. As to quaternary structure, component of the mitochondrial ribosome large subunit (39S) which comprises a 16S rRNA and about 50 distinct proteins.

Its subcellular location is the mitochondrion. The chain is Large ribosomal subunit protein uL23m (mrpl-23) from Caenorhabditis briggsae.